The chain runs to 392 residues: MRKKLTALVLSALPLAAVADVSLYGEIKAGVEGRNYQLQLTEAQAANGGASGQVKVTKVTKAKSRIRTKISDFGSFIGFKGSEDLGDGLKAVWQLEQDVSVAGGGATQWGNRESFIGLAGEFGTLRAGRVANQFDDASQAIDPWDSNNDVASQLGIFKRHDDMPVSVRYDSPEFSGFSGSVQFVPIQNSKSAYTPAYYTKNTNNNLTLVPAVVGKPGSDVYYAGLNYKNGGFAGNYAFKYARHANVGRNAFELFLIGSGSDQAKGTDPLKNHQVHRLTGGYEEGGLNLALAAQLDLSENGDKTKNSTTEIAATASYRFGNAVPRISYAHGFDFIERGKKGENTSYDQIIAGVDYDFSKRTSAIVSGAWLKRNTGIGNYTQINAASVGLRHKF.

The N-terminal stretch at 1–19 is a signal peptide; that stretch reads MRKKLTALVLSALPLAAVA.

This sequence belongs to the Gram-negative porin family. Homotrimer.

It localises to the cell outer membrane. Functionally, serves as a slightly cation selective porin. Major antigen on the gonococcal cell surface and it may have pathogenic properties in addition to its porin activity. In Neisseria meningitidis serogroup B (strain ATCC BAA-335 / MC58), this protein is Major outer membrane protein P.IA (porA).